A 185-amino-acid polypeptide reads, in one-letter code: Large ribosomal subunit protein uL5 (185 aa).

This sequence belongs to the universal ribosomal protein uL5 family. Part of the 50S ribosomal subunit; part of the 5S rRNA/L5/L18/L25 subcomplex. Contacts the 5S rRNA and the P site tRNA. Forms a bridge to the 30S subunit in the 70S ribosome.

In terms of biological role, this is one of the proteins that bind and probably mediate the attachment of the 5S RNA into the large ribosomal subunit, where it forms part of the central protuberance. In the 70S ribosome it contacts protein S13 of the 30S subunit (bridge B1b), connecting the 2 subunits; this bridge is implicated in subunit movement. Contacts the P site tRNA; the 5S rRNA and some of its associated proteins might help stabilize positioning of ribosome-bound tRNAs. This Rhodopseudomonas palustris (strain BisA53) protein is Large ribosomal subunit protein uL5.